A 185-amino-acid chain; its full sequence is Large ribosomal subunit protein uL18 (185 aa).

The protein belongs to the universal ribosomal protein uL18 family. As to quaternary structure, part of the 50S ribosomal subunit. Contacts the 5S and 23S rRNAs.

Functionally, this is one of the proteins that bind and probably mediate the attachment of the 5S RNA into the large ribosomal subunit, where it forms part of the central protuberance. The polypeptide is Large ribosomal subunit protein uL18 (Halorubrum lacusprofundi (strain ATCC 49239 / DSM 5036 / JCM 8891 / ACAM 34)).